Consider the following 319-residue polypeptide: Acetyl-coenzyme A carboxylase carboxyl transferase subunit alpha (319 aa).

The 262-residue stretch at 34–295 folds into the CoA carboxyltransferase C-terminal domain; sequence ELEEEVSKLK…KVRLKRDLAD (262 aa).

The protein belongs to the AccA family. As to quaternary structure, acetyl-CoA carboxylase is a heterohexamer composed of biotin carboxyl carrier protein (AccB), biotin carboxylase (AccC) and two subunits each of ACCase subunit alpha (AccA) and ACCase subunit beta (AccD).

The protein localises to the cytoplasm. The enzyme catalyses N(6)-carboxybiotinyl-L-lysyl-[protein] + acetyl-CoA = N(6)-biotinyl-L-lysyl-[protein] + malonyl-CoA. The protein operates within lipid metabolism; malonyl-CoA biosynthesis; malonyl-CoA from acetyl-CoA: step 1/1. In terms of biological role, component of the acetyl coenzyme A carboxylase (ACC) complex. First, biotin carboxylase catalyzes the carboxylation of biotin on its carrier protein (BCCP) and then the CO(2) group is transferred by the carboxyltransferase to acetyl-CoA to form malonyl-CoA. This chain is Acetyl-coenzyme A carboxylase carboxyl transferase subunit alpha, found in Pseudoalteromonas translucida (strain TAC 125).